The chain runs to 242 residues: Ribonuclease 3 (242 aa).

Residues L10 to G146 enclose the RNase III domain. E59 contacts Mg(2+). D63 is an active-site residue. Mg(2+) contacts are provided by D132 and E135. E135 is an active-site residue. Residues D172–K241 enclose the DRBM domain. Positions V216–K242 are disordered. A compositionally biased stretch (basic and acidic residues) spans T223–K242.

The protein belongs to the ribonuclease III family. As to quaternary structure, homodimer. Mg(2+) serves as cofactor.

The protein localises to the cytoplasm. The catalysed reaction is Endonucleolytic cleavage to 5'-phosphomonoester.. Digests double-stranded RNA. Involved in the processing of primary rRNA transcript to yield the immediate precursors to the large and small rRNAs (23S and 16S). Processes some mRNAs, and tRNAs when they are encoded in the rRNA operon. Processes pre-crRNA and tracrRNA of type II CRISPR loci if present in the organism. This Staphylococcus carnosus (strain TM300) protein is Ribonuclease 3.